A 525-amino-acid polypeptide reads, in one-letter code: Glutamyl-tRNA(Gln) amidotransferase subunit A, mitochondrial (525 aa).

Catalysis depends on charge relay system residues K76 and S168. Residue S192 is the Acyl-ester intermediate of the active site.

Belongs to the amidase family. GatA subfamily. Subunit of the heterotrimeric GatCAB amidotransferase (AdT) complex, composed of A (QRSL1), B (GATB) and C (GATC) subunits.

Its subcellular location is the mitochondrion. The enzyme catalyses L-glutamyl-tRNA(Gln) + L-glutamine + ATP + H2O = L-glutaminyl-tRNA(Gln) + L-glutamate + ADP + phosphate + H(+). Allows the formation of correctly charged Gln-tRNA(Gln) through the transamidation of misacylated Glu-tRNA(Gln) in the mitochondria. The reaction takes place in the presence of glutamine and ATP through an activated gamma-phospho-Glu-tRNA(Gln). The chain is Glutamyl-tRNA(Gln) amidotransferase subunit A, mitochondrial (Qrsl1) from Mus musculus (Mouse).